The chain runs to 863 residues: Oleate activated transcription factor 3 (863 aa).

A DNA-binding region (zn(2)-C6 fungal-type) is located at residues 18 to 47; sequence VCTNCKKRKSKCDRTKPCGTCVRLGDVDSC. The segment covering 52–63 has biased composition (polar residues); it reads DSSGQPESSPSL. Residues 52 to 99 are disordered; it reads DSSGQPESSPSLNDADPLRKQSTPAERISPGFIKKRRSSQTRQDEDHW.

It belongs to the OAF3 family.

The protein localises to the cytoplasm. It localises to the nucleus. Its subcellular location is the mitochondrion. Transcriptional inhibitor with a significantly increased number of target genes in response to oleate. The polypeptide is Oleate activated transcription factor 3 (OAF3) (Saccharomyces cerevisiae (strain ATCC 204508 / S288c) (Baker's yeast)).